Reading from the N-terminus, the 473-residue chain is Histone-lysine N-methyltransferase SET5 (473 aa).

The SET domain occupies 107 to 381 (ANVHIIMTSK…SGEELTTTYV (275 aa)).

It belongs to the class V-like SAM-binding methyltransferase superfamily. Histone-lysine methyltransferase family. SET5 subfamily.

Its subcellular location is the nucleus. The protein localises to the chromosome. It localises to the cytoplasm. It catalyses the reaction L-lysyl-[histone] + S-adenosyl-L-methionine = N(6)-methyl-L-lysyl-[histone] + S-adenosyl-L-homocysteine + H(+). Its function is as follows. Histone methyltransferase that monomethylates 'Lys-5', 'Lys-8' and 'Lys-12' of histone H4 (H4K5me1, H4K8me1 and H4K12me1, respectively), thereby controlling gene expression and remodeling chromatin structures. The protein is Histone-lysine N-methyltransferase SET5 (SET5) of Candida albicans (strain SC5314 / ATCC MYA-2876) (Yeast).